We begin with the raw amino-acid sequence, 475 residues long: Citrate synthase, mitochondrial (475 aa).

Active-site residues include His-310, His-356, and Asp-411.

Belongs to the citrate synthase family.

The protein localises to the mitochondrion matrix. It carries out the reaction oxaloacetate + acetyl-CoA + H2O = citrate + CoA + H(+). It participates in carbohydrate metabolism; tricarboxylic acid cycle; isocitrate from oxaloacetate: step 1/2. This is Citrate synthase, mitochondrial (cit-1) from Aspergillus niger.